The following is a 229-amino-acid chain: Protein FMP52-2, mitochondrial (229 aa).

The N-terminal 45 residues, 1 to 45, are a transit peptide targeting the mitochondrion; that stretch reads MAAGAFILGSTGLCGYQMLRFAEKSSLFDKISTVGRKLPDFKSEK.

It belongs to the FMP52 family.

It localises to the mitochondrion outer membrane. This Scheffersomyces stipitis (strain ATCC 58785 / CBS 6054 / NBRC 10063 / NRRL Y-11545) (Yeast) protein is Protein FMP52-2, mitochondrial (FMP522).